Consider the following 159-residue polypeptide: Nucleotide-binding protein PSPPH_4093 (159 aa).

The protein belongs to the YajQ family.

In terms of biological role, nucleotide-binding protein. This chain is Nucleotide-binding protein PSPPH_4093, found in Pseudomonas savastanoi pv. phaseolicola (strain 1448A / Race 6) (Pseudomonas syringae pv. phaseolicola (strain 1448A / Race 6)).